The sequence spans 108 residues: Tubulin-specific chaperone A (108 aa).

Ala-2 is subject to N-acetylalanine.

This sequence belongs to the TBCA family. In terms of assembly, supercomplex made of cofactors A to E. Cofactors A and D function by capturing and stabilizing tubulin in a quasi-native conformation. Cofactor E binds to the cofactor D-tubulin complex; interaction with cofactor C then causes the release of tubulin polypeptides that are committed to the native state.

It localises to the cytoplasm. The protein localises to the cytoskeleton. In terms of biological role, tubulin-folding protein; involved in the early step of the tubulin folding pathway. In Oryctolagus cuniculus (Rabbit), this protein is Tubulin-specific chaperone A (TBCA).